The chain runs to 641 residues: Chaperone protein DnaK (641 aa).

At T201 the chain carries Phosphothreonine; by autocatalysis. The segment covering 604–622 (ASAEQGGAAPGADAGNAGK) has biased composition (low complexity). The interval 604 to 625 (ASAEQGGAAPGADAGNAGKAQD) is disordered.

The protein belongs to the heat shock protein 70 family.

Acts as a chaperone. The polypeptide is Chaperone protein DnaK (Stenotrophomonas maltophilia (strain R551-3)).